Reading from the N-terminus, the 849-residue chain is Protein translocase subunit SecA (849 aa).

ATP-binding positions include glutamine 85, 103 to 107 (GEGKT), and aspartate 493. Residues cysteine 832, cysteine 834, cysteine 843, and histidine 844 each coordinate Zn(2+).

It belongs to the SecA family. Monomer and homodimer. Part of the essential Sec protein translocation apparatus which comprises SecA, SecYEG and auxiliary proteins SecDF. Other proteins may also be involved. Requires Zn(2+) as cofactor.

Its subcellular location is the cell membrane. The protein localises to the cytoplasm. The enzyme catalyses ATP + H2O + cellular proteinSide 1 = ADP + phosphate + cellular proteinSide 2.. Functionally, part of the Sec protein translocase complex. Interacts with the SecYEG preprotein conducting channel. Has a central role in coupling the hydrolysis of ATP to the transfer of proteins into and across the cell membrane, serving as an ATP-driven molecular motor driving the stepwise translocation of polypeptide chains across the membrane. The polypeptide is Protein translocase subunit SecA (Streptococcus thermophilus (strain ATCC BAA-250 / LMG 18311)).